The primary structure comprises 128 residues: Large ribosomal subunit protein bL17 (128 aa).

Belongs to the bacterial ribosomal protein bL17 family. As to quaternary structure, part of the 50S ribosomal subunit. Contacts protein L32.

The polypeptide is Large ribosomal subunit protein bL17 (Glaesserella parasuis serovar 5 (strain SH0165) (Haemophilus parasuis)).